The following is a 561-amino-acid chain: Membrane protein insertase YidC (561 aa).

The next 6 helical transmembrane spans lie at isoleucine 7–tyrosine 27, leucine 342–leucine 362, leucine 368–phenylalanine 388, leucine 438–leucine 458, tryptophan 469–methionine 489, and proline 516–valine 536.

Belongs to the OXA1/ALB3/YidC family. Type 1 subfamily. As to quaternary structure, interacts with the Sec translocase complex via SecD. Specifically interacts with transmembrane segments of nascent integral membrane proteins during membrane integration.

It localises to the cell inner membrane. Functionally, required for the insertion and/or proper folding and/or complex formation of integral membrane proteins into the membrane. Involved in integration of membrane proteins that insert both dependently and independently of the Sec translocase complex, as well as at least some lipoproteins. Aids folding of multispanning membrane proteins. This chain is Membrane protein insertase YidC, found in Pseudomonas entomophila (strain L48).